Consider the following 318-residue polypeptide: NAD kinase (318 aa).

Residue Asp-80 is the Proton acceptor of the active site. Residues 80-81 (DG), Arg-85, 155-156 (NE), Asp-185, and 196-201 (TAYAFS) each bind NAD(+).

Belongs to the NAD kinase family. The cofactor is a divalent metal cation.

The protein resides in the cytoplasm. It carries out the reaction NAD(+) + ATP = ADP + NADP(+) + H(+). Its function is as follows. Involved in the regulation of the intracellular balance of NAD and NADP, and is a key enzyme in the biosynthesis of NADP. Catalyzes specifically the phosphorylation on 2'-hydroxyl of the adenosine moiety of NAD to yield NADP. This is NAD kinase from Corynebacterium efficiens (strain DSM 44549 / YS-314 / AJ 12310 / JCM 11189 / NBRC 100395).